The sequence spans 239 residues: Uridylate kinase (239 aa).

10–13 (KFSG) provides a ligand contact to ATP. The tract at residues 18–23 (GENGFG) is involved in allosteric activation by GTP. Gly-52 provides a ligand contact to UMP. ATP contacts are provided by Gly-53 and Arg-57. Residues Asp-73 and 134 to 141 (TGNPYFTT) each bind UMP. Positions 161, 167, and 170 each coordinate ATP.

Belongs to the UMP kinase family. As to quaternary structure, homohexamer.

The protein resides in the cytoplasm. The catalysed reaction is UMP + ATP = UDP + ADP. It participates in pyrimidine metabolism; CTP biosynthesis via de novo pathway; UDP from UMP (UMPK route): step 1/1. Its activity is regulated as follows. Allosterically activated by GTP. Inhibited by UTP. Catalyzes the reversible phosphorylation of UMP to UDP. The polypeptide is Uridylate kinase (Campylobacter jejuni subsp. doylei (strain ATCC BAA-1458 / RM4099 / 269.97)).